The primary structure comprises 859 residues: Cadherin-related family member 1 (859 aa).

Residues 1–21 (MRRGPRVALVLGLLRIYLAQA) form the signal peptide. The Extracellular segment spans residues 22–701 (NFAPHFFDNG…LIQTKDNPMK (680 aa)). Cadherin domains lie at 36 to 135 (NGNM…APRF), 136 to 247 (IQEP…APIF), 248 to 354 (VGTP…PPTF), 360 to 473 (PQNK…VPKF), 474 to 577 (TSHY…YPQF), and 569 to 691 (DVND…MAAF). N-linked (GlcNAc...) asparagine glycosylation is found at asparagine 58 and asparagine 89. Asparagine 288 carries an N-linked (GlcNAc...) asparagine glycan. Residues 702 to 722 (AVGVLAGVMAIVVAITVLIST) form a helical membrane-spanning segment. At 723–859 (ATFWRNKKSN…KKSLDNKAYI (137 aa)) the chain is on the cytoplasmic side. The segment at 793–838 (PALPPPPKMASSMVAQQTVPTVSGSLTPQPSPQLPTPKTLGGPVQS) is disordered. Over residues 805-816 (MVAQQTVPTVSG) the composition is skewed to polar residues.

Interacts with PROM1. Post-translationally, undergoes proteolytic cleavage; produces a soluble 95 kDa N-terminal fragment and a 25 kDa cell-associated C-terminal fragment. In terms of tissue distribution, expressed in cone and rod photoreceptor cells (at protein level). Expressed in photoreceptor cells of the outer nuclear layer of the retina. Expressed in mitral and tufted cells in the olfactory bulb.

Its subcellular location is the cell membrane. Potential calcium-dependent cell-adhesion protein. May be required for the structural integrity of the outer segment (OS) of photoreceptor cells. The sequence is that of Cadherin-related family member 1 (Cdhr1) from Mus musculus (Mouse).